A 151-amino-acid chain; its full sequence is Large ribosomal subunit protein bL9 (151 aa).

It belongs to the bacterial ribosomal protein bL9 family.

Functionally, binds to the 23S rRNA. In Pseudothermotoga lettingae (strain ATCC BAA-301 / DSM 14385 / NBRC 107922 / TMO) (Thermotoga lettingae), this protein is Large ribosomal subunit protein bL9.